The following is a 98-amino-acid chain: NADH-ubiquinone oxidoreductase chain 4L (98 aa).

The next 3 membrane-spanning stretches (helical) occupy residues 1–21 (MSIT…GLLL), 29–49 (SLLC…MIIL), and 61–81 (IILL…LVMV).

It belongs to the complex I subunit 4L family. As to quaternary structure, core subunit of respiratory chain NADH dehydrogenase (Complex I) which is composed of 45 different subunits.

Its subcellular location is the mitochondrion inner membrane. The catalysed reaction is a ubiquinone + NADH + 5 H(+)(in) = a ubiquinol + NAD(+) + 4 H(+)(out). Core subunit of the mitochondrial membrane respiratory chain NADH dehydrogenase (Complex I) which catalyzes electron transfer from NADH through the respiratory chain, using ubiquinone as an electron acceptor. Part of the enzyme membrane arm which is embedded in the lipid bilayer and involved in proton translocation. This chain is NADH-ubiquinone oxidoreductase chain 4L (MT-ND4L), found in Platyrrhinus dorsalis (Thomas's broad-nosed bat).